We begin with the raw amino-acid sequence, 545 residues long: Chaperonin GroEL (545 aa).

ATP is bound by residues 30-33, Lys-51, 87-91, Gly-415, 479-481, and Asp-495; these read TLGP, DGTTT, and NAA. Residues 526–545 form a disordered region; that stretch reads KDDAPAPAMPDMGGMGGMGM.

Belongs to the chaperonin (HSP60) family. Forms a cylinder of 14 subunits composed of two heptameric rings stacked back-to-back. Interacts with the co-chaperonin GroES.

Its subcellular location is the cytoplasm. The catalysed reaction is ATP + H2O + a folded polypeptide = ADP + phosphate + an unfolded polypeptide.. In terms of biological role, together with its co-chaperonin GroES, plays an essential role in assisting protein folding. The GroEL-GroES system forms a nano-cage that allows encapsulation of the non-native substrate proteins and provides a physical environment optimized to promote and accelerate protein folding. The polypeptide is Chaperonin GroEL (Paracidovorax citrulli (strain AAC00-1) (Acidovorax citrulli)).